Here is a 211-residue protein sequence, read N- to C-terminus: NADH-quinone oxidoreductase subunit C (211 aa).

The protein belongs to the complex I 30 kDa subunit family. NDH-1 is composed of 14 different subunits. Subunits NuoB, C, D, E, F, and G constitute the peripheral sector of the complex.

Its subcellular location is the cell inner membrane. It carries out the reaction a quinone + NADH + 5 H(+)(in) = a quinol + NAD(+) + 4 H(+)(out). Its function is as follows. NDH-1 shuttles electrons from NADH, via FMN and iron-sulfur (Fe-S) centers, to quinones in the respiratory chain. The immediate electron acceptor for the enzyme in this species is believed to be ubiquinone. Couples the redox reaction to proton translocation (for every two electrons transferred, four hydrogen ions are translocated across the cytoplasmic membrane), and thus conserves the redox energy in a proton gradient. This is NADH-quinone oxidoreductase subunit C from Azorhizobium caulinodans (strain ATCC 43989 / DSM 5975 / JCM 20966 / LMG 6465 / NBRC 14845 / NCIMB 13405 / ORS 571).